Here is a 394-residue protein sequence, read N- to C-terminus: Guanine nucleotide-binding protein G(s) subunit alpha (394 aa).

Residues 1–23 (MGCLGNSKTEDQRNEEKAQREAN) form a disordered region. Glycine 2 is lipidated: N-palmitoyl glycine. The S-palmitoyl cysteine moiety is linked to residue cysteine 3. Over residues 8–23 (KTEDQRNEEKAQREAN) the composition is skewed to basic and acidic residues. Residues 39–394 (ATHRLLLLGA…RMHLRQYELL (356 aa)) form the G-alpha domain. The G1 motif stretch occupies residues 42–55 (RLLLLGAGESGKST). 47 to 55 (GAGESGKST) lines the GTP pocket. Residue serine 54 participates in Mg(2+) binding. The tract at residues 68–90 (FNGEGGEEDPQAARSNSDGEKAT) is disordered. Positions 196-204 (DLLRCRVLT) are G2 motif. GTP-binding positions include 197 to 204 (LLRCRVLT), 223 to 227 (DVGGQ), 292 to 295 (NKQD), and alanine 366. Position 204 (threonine 204) interacts with Mg(2+). The G3 motif stretch occupies residues 219–228 (FHMFDVGGQR). Residues 288 to 295 (ILFLNKQD) form a G4 motif region. The interval 364–369 (TCAVDT) is G5 motif.

This sequence belongs to the G-alpha family. G(s) subfamily. In terms of assembly, heterotrimeric G proteins are composed of 3 units; alpha, beta and gamma. The alpha chain contains the guanine nucleotide binding site. Interacts with CRY1; the interaction may block GPCR-mediated regulation of cAMP concentrations. Interacts with ADCY6 and stimulates its adenylyl cyclase activity. Interacts with ADCY2 and ADCY5. Stimulates the ADCY5 adenylyl cyclase activity. Interaction with SASH1.

It is found in the cell membrane. Guanine nucleotide-binding proteins (G proteins) function as transducers in numerous signaling pathways controlled by G protein-coupled receptors (GPCRs). Signaling involves the activation of adenylyl cyclases, resulting in increased levels of the signaling molecule cAMP. GNAS functions downstream of several GPCRs, including beta-adrenergic receptors. Stimulates the Ras signaling pathway via RAPGEF2. This is Guanine nucleotide-binding protein G(s) subunit alpha (GNAS) from Cricetulus griseus (Chinese hamster).